The following is an 83-amino-acid chain: Small ribosomal subunit protein bS16 (83 aa).

This sequence belongs to the bacterial ribosomal protein bS16 family.

The sequence is that of Small ribosomal subunit protein bS16 from Pseudomonas fluorescens (strain ATCC BAA-477 / NRRL B-23932 / Pf-5).